A 265-amino-acid polypeptide reads, in one-letter code: Cytochrome c oxidase subunit 3 (265 aa).

6 helical membrane-spanning segments follow: residues 16–36 (PWPISGSLGALATTVGGVMYM), 41–61 (GGATLLSLGLIFLLYTMFVWW), 84–104 (YGSILFIVSEVMSFFLFFWAS), 162–182 (AVYALVATVLLALVSTGFQGM), 200–220 (FLLATGFHGFHVIIGTLFLIV), and 242–262 (AWYWHFVDVVRLFPFVSIYWW).

This sequence belongs to the cytochrome c oxidase subunit 3 family. As to quaternary structure, component of the cytochrome c oxidase (complex IV, CIV), a multisubunit enzyme composed of a catalytic core of 3 subunits and several supernumerary subunits. The complex exists as a monomer or a dimer and forms supercomplexes (SCs) in the inner mitochondrial membrane with ubiquinol-cytochrome c oxidoreductase (cytochrome b-c1 complex, complex III, CIII).

Its subcellular location is the mitochondrion inner membrane. It catalyses the reaction 4 Fe(II)-[cytochrome c] + O2 + 8 H(+)(in) = 4 Fe(III)-[cytochrome c] + 2 H2O + 4 H(+)(out). Functionally, component of the cytochrome c oxidase, the last enzyme in the mitochondrial electron transport chain which drives oxidative phosphorylation. The respiratory chain contains 3 multisubunit complexes succinate dehydrogenase (complex II, CII), ubiquinol-cytochrome c oxidoreductase (cytochrome b-c1 complex, complex III, CIII) and cytochrome c oxidase (complex IV, CIV), that cooperate to transfer electrons derived from NADH and succinate to molecular oxygen, creating an electrochemical gradient over the inner membrane that drives transmembrane transport and the ATP synthase. Cytochrome c oxidase is the component of the respiratory chain that catalyzes the reduction of oxygen to water. Electrons originating from reduced cytochrome c in the intermembrane space (IMS) are transferred via the dinuclear copper A center (CU(A)) of subunit 2 and heme A of subunit 1 to the active site in subunit 1, a binuclear center (BNC) formed by heme A3 and copper B (CU(B)). The BNC reduces molecular oxygen to 2 water molecules using 4 electrons from cytochrome c in the IMS and 4 protons from the mitochondrial matrix. The protein is Cytochrome c oxidase subunit 3 (COX3) of Zea mays (Maize).